The chain runs to 167 residues: MHTFGYRANALLTFAVTALAFICAIASFSDKFSNQNPSAEIQILNINRFKKQSHGNDEVSLTLDISADLQSLFTWNTKQVFVFVAAEYETPKNSLNQVSLWDAIIPAKEHAKFRIQVSNKYRFIDQGQNLRGKDFNLTLHWHVMPKTGKMFADKIVLPGYSLPDAYR.

The Cytoplasmic segment spans residues 1 to 11; it reads MHTFGYRANAL. The chain crosses the membrane as a helical; Signal-anchor for type II membrane protein span at residues 12–32; it reads LTFAVTALAFICAIASFSDKF. Residues 33–167 are Lumenal-facing; that stretch reads SNQNPSAEIQ…PGYSLPDAYR (135 aa). An N-linked (GlcNAc...) asparagine glycan is attached at Asn136.

It belongs to the SPCS3 family. In terms of assembly, component of the signal peptidase complex (SPC) composed of a catalytic subunit SEC11 and three accessory subunits SPCS1, SPCS2 and SPCS3. The complex induces a local thinning of the ER membrane which is used to measure the length of the signal peptide (SP) h-region of protein substrates. This ensures the selectivity of the complex towards h-regions shorter than 18-20 amino acids.

Its subcellular location is the endoplasmic reticulum membrane. Functionally, essential component of the signal peptidase complex (SPC) which catalyzes the cleavage of N-terminal signal sequences from nascent proteins as they are translocated into the lumen of the endoplasmic reticulum. Essential for the SPC catalytic activity, possibly by stabilizing and positioning the active center of the complex close to the lumenal surface. In Arabidopsis thaliana (Mouse-ear cress), this protein is Signal peptidase complex subunit 3A.